Here is a 558-residue protein sequence, read N- to C-terminus: Tektin-5 (558 aa).

Positions 347–381 (ISEETDVKNKLQTQLAKILQEIFQAENTIMLLERA) form a coiled coil.

The protein belongs to the tektin family. In terms of assembly, microtubule inner protein component of sperm flagellar doublet microtubules. Interacts with TEKT3. In terms of processing, ubiquitinated, leading to its degradation. Deubiquitinated by USP16, promoting its stability. Specifically expressed in testis.

Its subcellular location is the cytoplasm. The protein resides in the cytoskeleton. It localises to the flagellum axoneme. Functionally, sperm-specific microtubule inner protein (MIP) part of the dynein-decorated doublet microtubules (DMTs) in flagellar axoneme. Forms an extensive interaction network in different conformations that reinforces the helix bundle composed by other tektin proteins (TEKT1 to TEKT4) and MIPs to anchor the tektin bundle onto the tubulin wall of A-tubule of the sperm flagellum. The chain is Tektin-5 from Rattus norvegicus (Rat).